Consider the following 899-residue polypeptide: Pre-mRNA-splicing factor 6 (899 aa).

Residues 1–65 (MERPSFLDQE…QSQPKDDEDD (65 aa)) form a disordered region. The segment covering 28–51 (TKEKQVVSNDDKGRRIPKRYRENL) has biased composition (basic and acidic residues). HAT repeat units follow at residues 221-253 (EDLQ…LEEK), 255-287 (RKFS…LHES), 289-318 (VHYC…DLES), 319-350 (TTVN…FEAD), 352-381 (AQVI…LQSY), 383-414 (NAKM…RNNP), 493-525 (PHSK…ATES), 545-578 (NSDD…DTRQ), 608-645 (LQLD…FLRY), 648-680 (LNEE…IYHS), 682-714 (GNIE…IDEI), 751-783 (GNLD…LFKH), and 819-851 (AQYE…TYAR).

Component of the U4/U6-U5 tri-snRNP complex composed of the U4, U6 and U5 snRNAs and at least PRP3, PRP4, PRP6, PRP8, PRP18, PRP31, PRP38, SNU13, SNU23, SNU66, SNU114, SPP381, SMB1, SMD1, SMD2, SMD3, SMX2, SMX3, LSM2, LSM3, LSM4, LSM5, LSM6, LSM7, LSM8, BRR2 and DIB1.

It is found in the nucleus. Functionally, participates in pre-mRNA splicing. Part of the U4/U5/U6 tri-snRNP complex, one of the building blocks of the spliceosome. This chain is Pre-mRNA-splicing factor 6 (PRP6), found in Saccharomyces cerevisiae (strain ATCC 204508 / S288c) (Baker's yeast).